Reading from the N-terminus, the 145-residue chain is Cell division protein SepF (145 aa).

Residues 21–41 (DKPQESTKAKEENVKPKHETP) form a disordered region. The segment covering 23–41 (PQESTKAKEENVKPKHETP) has biased composition (basic and acidic residues).

It belongs to the SepF family. In terms of assembly, homodimer. Interacts with FtsZ.

Its subcellular location is the cytoplasm. Functionally, cell division protein that is part of the divisome complex and is recruited early to the Z-ring. Probably stimulates Z-ring formation, perhaps through the cross-linking of FtsZ protofilaments. Its function overlaps with FtsA. The sequence is that of Cell division protein SepF from Caldicellulosiruptor saccharolyticus (strain ATCC 43494 / DSM 8903 / Tp8T 6331).